We begin with the raw amino-acid sequence, 142 residues long: Nucleoside diphosphate kinase (142 aa).

ATP is bound by residues Lys-11, Phe-59, Arg-87, Thr-93, Arg-104, and Asn-114. The active-site Pros-phosphohistidine intermediate is the His-117.

It belongs to the NDK family. Homotetramer. Requires Mg(2+) as cofactor.

The protein localises to the cytoplasm. The catalysed reaction is a 2'-deoxyribonucleoside 5'-diphosphate + ATP = a 2'-deoxyribonucleoside 5'-triphosphate + ADP. The enzyme catalyses a ribonucleoside 5'-diphosphate + ATP = a ribonucleoside 5'-triphosphate + ADP. Major role in the synthesis of nucleoside triphosphates other than ATP. The ATP gamma phosphate is transferred to the NDP beta phosphate via a ping-pong mechanism, using a phosphorylated active-site intermediate. This Wigglesworthia glossinidia brevipalpis protein is Nucleoside diphosphate kinase.